Here is a 325-residue protein sequence, read N- to C-terminus: Tagatose 1,6-diphosphate aldolase (325 aa).

It belongs to the aldolase LacD family.

The enzyme catalyses D-tagatofuranose 1,6-bisphosphate = D-glyceraldehyde 3-phosphate + dihydroxyacetone phosphate. The protein operates within carbohydrate metabolism; D-tagatose 6-phosphate degradation; D-glyceraldehyde 3-phosphate and glycerone phosphate from D-tagatose 6-phosphate: step 2/2. This chain is Tagatose 1,6-diphosphate aldolase, found in Staphylococcus epidermidis (strain ATCC 35984 / DSM 28319 / BCRC 17069 / CCUG 31568 / BM 3577 / RP62A).